The following is a 309-amino-acid chain: Homoserine O-succinyltransferase (309 aa).

Cys-142 functions as the Acyl-thioester intermediate in the catalytic mechanism. 2 residues coordinate substrate: Lys-163 and Ser-192. The Proton acceptor role is filled by His-235. Glu-237 is an active-site residue. Arg-249 provides a ligand contact to substrate.

This sequence belongs to the MetA family.

It is found in the cytoplasm. The catalysed reaction is L-homoserine + succinyl-CoA = O-succinyl-L-homoserine + CoA. The protein operates within amino-acid biosynthesis; L-methionine biosynthesis via de novo pathway; O-succinyl-L-homoserine from L-homoserine: step 1/1. Its function is as follows. Transfers a succinyl group from succinyl-CoA to L-homoserine, forming succinyl-L-homoserine. The chain is Homoserine O-succinyltransferase from Citrobacter koseri (strain ATCC BAA-895 / CDC 4225-83 / SGSC4696).